The primary structure comprises 222 residues: Thymidylate kinase (222 aa).

Residues 29-34 (RVGKST) and Arg-111 contribute to the ATP site. Residues 146-170 (LSMSSEDATKRGEYGGERYEKLEFQ) form an LID region.

Belongs to the thymidylate kinase family. Homodimer. Mg(2+) is required as a cofactor.

It carries out the reaction dTMP + ATP = dTDP + ADP. Its pathway is pyrimidine metabolism; dTTP biosynthesis. Functionally, catalyzes the phosphorylation of thymidine monophosphate (dTMP) to thymidine diphosphate (dTDP), the immediate precursor for the DNA building block dTTP, with ATP as the preferred phosphoryl donor in the presence of Mg(2+). The sequence is that of Thymidylate kinase (dtymk) from Dictyostelium discoideum (Social amoeba).